The primary structure comprises 248 residues: Zinc finger CCCH domain-containing protein 36 (248 aa).

Disordered stretches follow at residues Met1–Ser37 and Met87–Phe110. The C3H1-type 1 zinc finger occupies Gly36–Pro64. Residues Ser90–Gly103 show a composition bias toward gly residues. In terms of domain architecture, KH spans Ser113–Val177. The disordered stretch occupies residues Ala188 to His209. Gly residues predominate over residues Pro192–Ser204. The C3H1-type 2 zinc finger occupies Asn213–Ala240.

The polypeptide is Zinc finger CCCH domain-containing protein 36 (Arabidopsis thaliana (Mouse-ear cress)).